A 264-amino-acid chain; its full sequence is MSNSNIHTTAVIAEGTKLGNNVKIGPYCIIGPKVVLHDNVELKSHVVIEGITEIGENTVIYPFASIGQPPQILKYANERSSTIIGSNNTIREYVTVQAGSQGGGMMTRVGNNNLFMVGVHIGHDCKIGNNVVFANYVSLAGHIGVGDYAIIGGLSAVHQYARIGEYSMIGGLSPVGADVIPFGLVSSKRAVLEGLNLIGMNRKGFDKVKSLSALKAIEEIFSGEGNFAERIKQVAEKYNNNSIVIQIIDFLNQDSSRAFCRFEK.

It belongs to the transferase hexapeptide repeat family. LpxA subfamily. As to quaternary structure, homotrimer.

Its subcellular location is the cytoplasm. It catalyses the reaction a (3R)-hydroxyacyl-[ACP] + UDP-N-acetyl-alpha-D-glucosamine = a UDP-3-O-[(3R)-3-hydroxyacyl]-N-acetyl-alpha-D-glucosamine + holo-[ACP]. It participates in glycolipid biosynthesis; lipid IV(A) biosynthesis; lipid IV(A) from (3R)-3-hydroxytetradecanoyl-[acyl-carrier-protein] and UDP-N-acetyl-alpha-D-glucosamine: step 1/6. Functionally, involved in the biosynthesis of lipid A, a phosphorylated glycolipid that anchors the lipopolysaccharide to the outer membrane of the cell. This Rickettsia peacockii (strain Rustic) protein is Acyl-[acyl-carrier-protein]--UDP-N-acetylglucosamine O-acyltransferase.